A 252-amino-acid polypeptide reads, in one-letter code: Ubiquinone/menaquinone biosynthesis C-methyltransferase UbiE (252 aa).

Residues threonine 71, aspartate 100, 124 to 125, and serine 141 each bind S-adenosyl-L-methionine; that span reads DA.

The protein belongs to the class I-like SAM-binding methyltransferase superfamily. MenG/UbiE family.

It catalyses the reaction a 2-demethylmenaquinol + S-adenosyl-L-methionine = a menaquinol + S-adenosyl-L-homocysteine + H(+). It carries out the reaction a 2-methoxy-6-(all-trans-polyprenyl)benzene-1,4-diol + S-adenosyl-L-methionine = a 5-methoxy-2-methyl-3-(all-trans-polyprenyl)benzene-1,4-diol + S-adenosyl-L-homocysteine + H(+). The protein operates within quinol/quinone metabolism; menaquinone biosynthesis; menaquinol from 1,4-dihydroxy-2-naphthoate: step 2/2. It functions in the pathway cofactor biosynthesis; ubiquinone biosynthesis. Its function is as follows. Methyltransferase required for the conversion of demethylmenaquinol (DMKH2) to menaquinol (MKH2) and the conversion of 2-polyprenyl-6-methoxy-1,4-benzoquinol (DDMQH2) to 2-polyprenyl-3-methyl-6-methoxy-1,4-benzoquinol (DMQH2). The polypeptide is Ubiquinone/menaquinone biosynthesis C-methyltransferase UbiE (Caulobacter sp. (strain K31)).